The chain runs to 537 residues: Putative cysteine ligase BshC (537 aa).

Residues 422–450 (IEKVEGMIEQQRRLNQDLLDEVAGNQNNI) adopt a coiled-coil conformation.

It belongs to the BshC family.

In terms of biological role, involved in bacillithiol (BSH) biosynthesis. May catalyze the last step of the pathway, the addition of cysteine to glucosamine malate (GlcN-Mal) to generate BSH. This Staphylococcus aureus (strain bovine RF122 / ET3-1) protein is Putative cysteine ligase BshC.